The chain runs to 366 residues: Chalcone synthase B (366 aa).

Cys-172 is an active-site residue.

It belongs to the thiolase-like superfamily. Chalcone/stilbene synthases family.

The catalysed reaction is (E)-4-coumaroyl-CoA + 3 malonyl-CoA + 3 H(+) = 2',4,4',6'-tetrahydroxychalcone + 3 CO2 + 4 CoA. It functions in the pathway secondary metabolite biosynthesis; flavonoid biosynthesis. In terms of biological role, the primary product of this enzyme is 4,2',4',6'-tetrahydroxychalcone (also termed naringenin-chalcone or chalcone) which can under specific conditions spontaneously isomerize into naringenin. The sequence is that of Chalcone synthase B (CHSB) from Ipomoea triloba (Trilobed morning glory).